Here is a 515-residue protein sequence, read N- to C-terminus: Organic cation/carnitine transporter 5 (515 aa).

Over 1-43 the chain is Cytoplasmic; sequence MADSLAPLLPTHIEEDEDTSSPLTFDKILEKSLSDFGFSQFLQ. A helical transmembrane segment spans residues 44–64; sequence IVLVGLALTFDSQQIFITVFT. At 65–124 the chain is on the extracellular side; sequence DAYPTWHCLDHTICNPATTDICKIPRSAWDWDGGFKGKSVISEFDLECSSSFLRSLPSST. A helical transmembrane segment spans residues 125–145; the sequence is FYVGSIVGGVVLAMIPDGSLG. At 146–149 the chain is on the cytoplasmic side; the sequence is RKQL. A helical transmembrane segment spans residues 150–172; it reads LFFSSFAMSLTGISIFLSSNIWI. The Extracellular portion of the chain corresponds to 173-177; it reads YSFLK. A helical membrane pass occupies residues 178–195; the sequence is FVIGFARSQTGTYALVLI. 195–202 provides a ligand contact to ATP; it reads ISERISTK. The Cytoplasmic portion of the chain corresponds to 196–208; the sequence is SERISTKWRPRAT. The helical transmembrane segment at 209-229 threads the bilayer; that stretch reads MVPFTLFVLGFMSLSGIAYLV. Residues 230–235 lie on the Extracellular side of the membrane; the sequence is RHASWK. A helical membrane pass occupies residues 236–256; sequence VLYLCTSIPAGIHSIFIYFFA. The Cytoplasmic segment spans residues 257–320; sequence LESPRWLHLE…LFIIKWAFRR (64 aa). The helical transmembrane segment at 321–341 threads the bilayer; that stretch reads VTLVMIIMFGLGMSYYGVPLA. Topologically, residues 342–350 are extracellular; that stretch reads VRDIKVNIY. A helical membrane pass occupies residues 351 to 371; the sequence is MSEALNAMVELPTFVVTPILL. At 372–379 the chain is on the cytoplasmic side; it reads EQFSRRSS. Residues 380–400 form a helical membrane-spanning segment; that stretch reads VLVNCLIGGASGVLCFVMSLY. Over 401–411 the chain is Extracellular; it reads GRTKIAFALEL. The helical transmembrane segment at 412-432 threads the bilayer; that stretch reads GSFFCARIGFNLMAIYLVELF. Residues 433–441 lie on the Cytoplasmic side of the membrane; that stretch reads PTCVRNSAT. A helical transmembrane segment spans residues 442–462; the sequence is MMLRQALVVGGACCPLIASLG. Residues 463–467 are Extracellular-facing; the sequence is RNVPS. The helical transmembrane segment at 468-488 threads the bilayer; it reads LSFAVFGFAMSGLGLFALLLP. Residues 489–515 are Cytoplasmic-facing; that stretch reads ETKGLSLCDTMEEQEQRDQALKTSHSC.

It belongs to the major facilitator (TC 2.A.1) superfamily. Organic cation transporter (TC 2.A.1.19) family. As to expression, mostly expressed in leaves and siliques, and, to a lower extent, in roots, stems and flowers.

It localises to the vacuole membrane. In terms of biological role, high affinity carnitine transporter involved in the active cellular uptake of carnitine. Also transports organic cations. The sequence is that of Organic cation/carnitine transporter 5 (OCT5) from Arabidopsis thaliana (Mouse-ear cress).